A 1461-amino-acid chain; its full sequence is MEARSRSAEELRRAELVEIIVETEAQTGVSGINVAGGGKEGIFVRELREDSPAARSLSLQEGDQLLSARVFFENFKYEDALRLLQCAEPYKVSFCLKRTVPTGDLALRPGTVSGYEIKGPRAKVAKLNIQSLSPVKKKKMVPGALGVPADLAPVDVEFSFPKFSRLRRGLKAEAVKGPVPAAPARRRLQLPRLRVREVAEEAQAARLAAAAPPPRKAKVEAEVAAGARFTAPQVELVGPRLPGAEVGVPQVSAPKAAPSAEAAGGFALHLPTLGLGAPAPPAVEAPAVGIQVPQVELPALPSLPTLPTLPCLETREGAVSVVVPTLDVAAPTVGVDLALPGAEVEARGEAPEVALKMPRLSFPRFGARAKEVAEAKVAKVSPEARVKGPRLRMPTFGLSLLEPRPAAPEVVESKLKLPTIKMPSLGIGVSGPEVKVPKGPEVKLPKAPEVKLPKVPEAALPEVRLPEVELPKVSEMKLPKVPEMAVPEVRLPEVELPKVSEMKLPKVPEMAVPEVRLPEVQLLKVSEMKLPKVPEMAVPEVRLPEVQLPKVSEMKLPEVSEVAVPEVRLPEVQLPKVPEMKVPEMKLPKVPEMKLPEMKLPEVQLPKVPEMAVPDVHLPEVQLPKVPEMKLPEMKLPEVKLPKVPEMAVPDVHLPEVQLPKVPEMKLPKMPEMAVPEVRLPEVQLPKVSEMKLPKVPEMAVPDVHLPEVQLPKVCEMKVPDMKLPEIKLPKVPEMAVPDVHLPEVQLPKVSEIRLPEMQVPKVPDVHLPKAPEVKLPRAPEVQLKATKAEQAEGMEFGFKMPKMTMPKLGRAESPSRGKPGEAGAEVSGKLVTLPCLQPEVDGEAHVGVPSLTLPSVELDLPGALGLQGQVPAAKMGKGERVEGPEVAAGVREVGFRVPSVEIVTPQLPAVEIEEGRLEMIETKVKPSSKFSLPKFGLSGPKVAKAEAEGAGRATKLKVSKFAISLPKARVGAEAEAKGAGEAGLLPALDLSIPQLSLDAHLPSGKVEVAGADLKFKGPRFALPKFGVRGRDTEAAELVPGVAELEGKGWGWDGRVKMPKLKMPSFGLARGKEAEVQGDRASPGEKAESTAVQLKIPEVELVTLGAQEEGRAEGAVAVSGMQLSGLKVSTAGQVVTEGHDAGLRMPPLGISLPQVELTGFGEAGTPGQQAQSTVPSAEGTAGYRVQVPQVTLSLPGAQVAGGELLVGEGVFKMPTVTVPQLELDVGLSREAQAGEAATGEGGLRLKLPTLGARARVGGEGAEEQPPGAERTFCLSLPDVELSPSGGNHAEYQVAEGEGEAGHKLKVRLPRFGLVRAKEGAEEGEKAKSPKLRLPRVGFSQSEMVTGEGSPSPEEEEEEEEEGSGEGASGRRGRVRVRLPRVGLAAPSKASRGQEGDAAPKSPVREKSPKFRFPRVSLSPKARSGSGDQEEGGLRVRLPSVGFSETGAPGPARMEGAQAAAV.

S7 bears the Phosphoserine mark. The PDZ domain occupies 16–99 (LVEIIVETEA…YKVSFCLKRT (84 aa)). Residues 70 to 84 (VFFENFKYEDALRLL) carry the Nuclear export signal motif. The short motif at 118–196 (KGPRAKVAKL…RLQLPRLRVR (79 aa)) is the Nuclear localization signal element. S133 is modified (phosphoserine). 55 repeat units span residues 431–435 (GPEVK), 439–443 (GPEVK), 447–451 (APEVK), 455–459 (VPEAA), 463–467 (VRLPE), 468–472 (VELPK), 473–477 (VSEMK), 481–485 (VPEMA), 486–490 (VPEVR), 494–498 (VELPK), 499–503 (VSEMK), 507–511 (VPEMA), 512–516 (VPEVR), 520–524 (VQLLK), 525–529 (VSEMK), 533–537 (VPEMA), 538–542 (VPEVR), 546–550 (VQLPK), 551–555 (VSEMK), 559–563 (VSEVA), 564–568 (VPEVR), 572–576 (VQLPK), 577–581 (VPEMK), 582–586 (VPEMK), 590–594 (VPEMK), 595–599 (LPEMK), 600–604 (LPEVQ), 608–612 (VPEMA), 613–617 (VPDVH), 618–622 (LPEVQ), 626–630 (VPEMK), 631–635 (LPEMK), 636–640 (LPEVK), 644–648 (VPEMA), 649–653 (VPDVH), 654–658 (LPEVQ), 662–666 (VPEMK), 670–674 (MPEMA), 675–679 (VPEVR), 683–687 (VQLPK), 688–692 (VSEMK), 696–700 (VPEMA), 701–705 (VPDVH), 706–710 (LPEVQ), 714–718 (VCEMK), 719–723 (VPDMK), 724–728 (LPEIK), 732–736 (VPEMA), 737–741 (VPDVH), 742–746 (LPEVQ), 750–754 (VSEIR), 755–759 (LPEMQ), 760–764 (VPKVP), 771–775 (APEVK), and 779–783 (APEVQ). The tract at residues 431 to 783 (GPEVKVPKGP…VKLPRAPEVQ (353 aa)) is 55 X 5 AA approximate tandem repeats of [LVMAG]-[PSREQC]-[EDKL]-[LIVMAP]-[AQKHRPE]; that may have a tripeptide spacer of [LV]-P-[KER]. 2 positions are modified to phosphoserine: S900 and S1082. Over residues 1318–1327 (EGAEEGEKAK) the composition is skewed to basic and acidic residues. Positions 1318-1461 (EGAEEGEKAK…RMEGAQAAAV (144 aa)) are disordered. S1349, S1351, S1363, S1401, S1407, and S1439 each carry phosphoserine. The span at 1352–1363 (PEEEEEEEEEGS) shows a compositional bias: acidic residues.

It belongs to the periaxin family. In terms of assembly, homodimer (via PDZ domain). Interacts with SCN10A. Found in a complex with SCN10A. Interacts with DRP2. Identified in a dystroglycan complex that contains at least PRX, DRP2, UTRN, DMD and DAG1. Detected in a complex composed of at least EZR, AHNAK, PPL and PRX. Identified in a complex with EZR, AHNAK, BFSP1, BFSP2, ANK2, PLEC, VIM and spectrin. In terms of tissue distribution, detected in spinal cord. Isoform 1 and isoform 2 are found in sciatic nerve and Schwann cells.

Its subcellular location is the cell membrane. It localises to the nucleus. The protein localises to the cytoplasm. The protein resides in the cell junction. Functionally, scaffolding protein that functions as part of a dystroglycan complex in Schwann cells, and as part of EZR and AHNAK-containing complexes in eye lens fiber cells. Required for the maintenance of the peripheral myelin sheath that is essential for normal transmission of nerve impulses and normal perception of sensory stimuli. Required for normal transport of MBP mRNA from the perinuclear to the paranodal regions. Required for normal remyelination after nerve injury. Required for normal elongation of Schwann cells and normal length of the internodes between the nodes of Ranvier. The demyelinated nodes of Ranvier permit saltatory transmission of nerve impulses; shorter internodes cause slower transmission of nerve impulses. Required for the formation of appositions between the abaxonal surface of the myelin sheath and the Schwann cell plasma membrane; the Schwann cell cytoplasm is restricted to regions between these appositions. Required for the formation of Cajal bands and of Schmidt-Lanterman incisures that correspond to short, cytoplasm-filled regions on myelinated nerves. Recruits DRP2 to the Schwann cell plasma membrane. Required for normal protein composition of the eye lens fiber cell plasma membrane and normal eye lens fiber cell morphology. In Homo sapiens (Human), this protein is Periaxin (PRX).